Reading from the N-terminus, the 244-residue chain is Small ribosomal subunit protein uS2 (244 aa).

A disordered region spans residues 224–244 (GQQGSDEAEEAEEAAEEVVAE). The span at 229–244 (DEAEEAEEAAEEVVAE) shows a compositional bias: acidic residues.

It belongs to the universal ribosomal protein uS2 family.

The sequence is that of Small ribosomal subunit protein uS2 from Desulfitobacterium hafniense (strain DSM 10664 / DCB-2).